The primary structure comprises 702 residues: Cadmium, zinc and cobalt-transporting ATPase (702 aa).

Residues 1–86 (MRLVKQEYVL…HIKKSADDGY (86 aa)) lie on the Cytoplasmic side of the membrane. The HMA domain maps to 4–72 (VKQEYVLDGL…KVKSIDPHVT (69 aa)). Cd(2+) contacts are provided by C15 and C18. Residues C15 and C18 each contribute to the Co(2+) site. Zn(2+) contacts are provided by C15 and C18. A helical transmembrane segment spans residues 87–107 (RNRMVNMLIRMAAAVILGAAA). Topologically, residues 108 to 116 (YLVQSGTIE) are extracellular. A helical transmembrane segment spans residues 117-136 (FFLFLGAYLIIGGDIIIRAV). Residues 137–143 (KNIIRGQ) lie on the Cytoplasmic side of the membrane. A helical transmembrane segment spans residues 144–163 (VFDEHFLMALATIGAFLIQQ). At 164 to 166 (YPE) the chain is on the extracellular side. The chain crosses the membrane as a helical span at residues 167 to 186 (GVAVMLFYQIGELFQGAAVS). Residues 187–320 (RSRKSISALM…ITKFAKYYTP (134 aa)) are Cytoplasmic-facing. Residues 321–339 (AVVIIAVLLAFVPPLVLSG) traverse the membrane as a helical segment. Residues 340–345 (AALSDW) are Extracellular-facing. A helical membrane pass occupies residues 346-363 (VYRALIFLVISCPCALVV). The Cytoplasmic segment spans residues 364–648 (SIPLGFFGGI…AIRIAKRTRR (285 aa)). D401 acts as the 4-aspartylphosphate intermediate in catalysis. Residues D595 and D599 each coordinate Mg(2+). Residues 649 to 670 (IVWQNIGFALGVKAIFLILGAF) form a helical membrane-spanning segment. Residues 671-678 (GIATMWEA) lie on the Extracellular side of the membrane. Residues 679–694 (VFSDVGVTLLAVANAM) form a helical membrane-spanning segment. Over 695–702 (RVMRLKNK) the chain is Cytoplasmic.

Belongs to the cation transport ATPase (P-type) (TC 3.A.3) family. Type IB subfamily.

It is found in the cell membrane. It carries out the reaction Zn(2+)(in) + ATP + H2O = Zn(2+)(out) + ADP + phosphate + H(+). The catalysed reaction is Cd(2+)(in) + ATP + H2O = Cd(2+)(out) + ADP + phosphate + H(+). Its function is as follows. Couples the hydrolysis of ATP with the transport of cadmium, zinc and cobalt out of the cell. Does not seem to transport copper. This Bacillus subtilis (strain 168) protein is Cadmium, zinc and cobalt-transporting ATPase (cadA).